The following is a 392-amino-acid chain: Na(+)/H(+) antiporter NhaA 2 (392 aa).

The next 11 membrane-spanning stretches (helical) occupy residues 20 to 40 (FFAA…AALI), 61 to 81 (LSVS…LVGL), 99 to 119 (ALPG…YVAF), 127 to 147 (IGGW…VLSL), 158 to 178 (IFLS…IALF), 181 to 201 (SDLS…LVAL), 209 to 229 (LLPY…SGIH), 265 to 285 (VAFA…LSGI), 298 to 318 (VALG…ALAI), 336 to 356 (GVAA…ALAF), and 365 to 385 (EVKV…VVVL).

This sequence belongs to the NhaA Na(+)/H(+) (TC 2.A.33) antiporter family.

Its subcellular location is the cell inner membrane. The enzyme catalyses Na(+)(in) + 2 H(+)(out) = Na(+)(out) + 2 H(+)(in). Na(+)/H(+) antiporter that extrudes sodium in exchange for external protons. The sequence is that of Na(+)/H(+) antiporter NhaA 2 from Pseudomonas syringae pv. syringae (strain B728a).